The chain runs to 516 residues: GMP synthase [glutamine-hydrolyzing] (516 aa).

Positions 8–198 (KILILDFGSQ…VVNICGCDTL (191 aa)) constitute a Glutamine amidotransferase type-1 domain. The Nucleophile role is filled by C84. Catalysis depends on residues H172 and E174. A GMPS ATP-PPase domain is found at 199-391 (WNIENIIEND…LGLPYNMLYR (193 aa)). 226–232 (SGGVDSS) provides a ligand contact to ATP.

In terms of assembly, homodimer.

It carries out the reaction XMP + L-glutamine + ATP + H2O = GMP + L-glutamate + AMP + diphosphate + 2 H(+). The protein operates within purine metabolism; GMP biosynthesis; GMP from XMP (L-Gln route): step 1/1. In terms of biological role, catalyzes the synthesis of GMP from XMP. The polypeptide is GMP synthase [glutamine-hydrolyzing] (Francisella tularensis subsp. mediasiatica (strain FSC147)).